We begin with the raw amino-acid sequence, 159 residues long: Eukaryotic translation initiation factor 5A-3 (159 aa).

Residues 1–12 (MSDEEHQFESKA) are compositionally biased toward basic and acidic residues. A disordered region spans residues 1-21 (MSDEEHQFESKADAGASKTYP). The residue at position 52 (lysine 52) is a Hypusine.

The protein belongs to the eIF-5A family. In terms of processing, lys-52 undergoes hypusination, a unique post-translational modification that consists in the addition of a butylamino group from spermidine to lysine side chain, leading to the formation of the unusual amino acid hypusine. eIF-5As are the only known proteins to undergo this modification, which is essential for their function.

Its function is as follows. Translation factor that promotes translation elongation and termination, particularly upon ribosome stalling at specific amino acid sequence contexts. Binds between the exit (E) and peptidyl (P) site of the ribosome and promotes rescue of stalled ribosome: specifically required for efficient translation of polyproline-containing peptides as well as other motifs that stall the ribosome. Acts as a ribosome quality control (RQC) cofactor by joining the RQC complex to facilitate peptidyl transfer during CAT tailing step. The chain is Eukaryotic translation initiation factor 5A-3 from Solanum lycopersicum (Tomato).